Reading from the N-terminus, the 660-residue chain is Acetyl-coenzyme A synthetase (660 aa).

CoA contacts are provided by residues 197–200 (RGGK) and Thr317. ATP-binding positions include 397–399 (GEP), 421–426 (DTWWQT), Asp512, and Arg528. CoA is bound at residue Ser536. Residue Arg539 participates in ATP binding. Residues Val550, His552, and Val555 each contribute to the Mg(2+) site. The residue at position 625 (Lys625) is an N6-acetyllysine.

Belongs to the ATP-dependent AMP-binding enzyme family. The cofactor is Mg(2+). Post-translationally, acetylated. Deacetylation by the SIR2-homolog deacetylase activates the enzyme.

The catalysed reaction is acetate + ATP + CoA = acetyl-CoA + AMP + diphosphate. Its function is as follows. Catalyzes the conversion of acetate into acetyl-CoA (AcCoA), an essential intermediate at the junction of anabolic and catabolic pathways. AcsA undergoes a two-step reaction. In the first half reaction, AcsA combines acetate with ATP to form acetyl-adenylate (AcAMP) intermediate. In the second half reaction, it can then transfer the acetyl group from AcAMP to the sulfhydryl group of CoA, forming the product AcCoA. The protein is Acetyl-coenzyme A synthetase of Burkholderia lata (strain ATCC 17760 / DSM 23089 / LMG 22485 / NCIMB 9086 / R18194 / 383).